The sequence spans 412 residues: Mitochondrial distribution and morphology protein 12 (412 aa).

Residues 1–410 (MSIDLEWAKL…FPNFHTLVMG (410 aa)) enclose the SMP-LTD domain. Disordered stretches follow at residues 66 to 96 (EDDE…DGYE), 108 to 136 (YTEG…SPTD), 166 to 238 (QGSG…QQEN), and 314 to 354 (PAGD…KPLP). The span at 220–238 (NQPVFPSQQPQQQQPQQEN) shows a compositional bias: low complexity.

This sequence belongs to the MDM12 family. In terms of assembly, component of the ER-mitochondria encounter structure (ERMES) or MDM complex, composed of MMM1, MDM10, MDM12 and MDM34. An MMM1 homodimer associates with one molecule of MDM12 on each side in a pairwise head-to-tail manner, and the SMP-LTD domains of MMM1 and MDM12 generate a continuous hydrophobic tunnel for phospholipid trafficking.

It localises to the mitochondrion outer membrane. The protein localises to the endoplasmic reticulum membrane. Functionally, component of the ERMES/MDM complex, which serves as a molecular tether to connect the endoplasmic reticulum (ER) and mitochondria. Components of this complex are involved in the control of mitochondrial shape and protein biogenesis, and function in nonvesicular lipid trafficking between the ER and mitochondria. MDM12 is required for the interaction of the ER-resident membrane protein MMM1 and the outer mitochondrial membrane-resident beta-barrel protein MDM10. The MDM12-MMM1 subcomplex functions in the major beta-barrel assembly pathway that is responsible for biogenesis of all mitochondrial outer membrane beta-barrel proteins, and acts in a late step after the SAM complex. The MDM10-MDM12-MMM1 subcomplex further acts in the TOM40-specific pathway after the action of the MDM12-MMM1 complex. Essential for establishing and maintaining the structure of mitochondria and maintenance of mtDNA nucleoids. This chain is Mitochondrial distribution and morphology protein 12, found in Coprinopsis cinerea (strain Okayama-7 / 130 / ATCC MYA-4618 / FGSC 9003) (Inky cap fungus).